A 93-amino-acid chain; its full sequence is Cell division topological specificity factor (93 aa).

It belongs to the MinE family.

In terms of biological role, prevents the cell division inhibition by proteins MinC and MinD at internal division sites while permitting inhibition at polar sites. This ensures cell division at the proper site by restricting the formation of a division septum at the midpoint of the long axis of the cell. The protein is Cell division topological specificity factor of Synechococcus sp. (strain WH7803).